Consider the following 924-residue polypeptide: Intercellular adhesion molecule 5 (924 aa).

Positions 1 to 31 (MPGPSPGLRRALLGLWAALGLGLFGLSAVSQ) are cleaved as a signal peptide. Topologically, residues 32 to 835 (EPFWADLQPR…RITVRVAGPW (804 aa)) are extracellular. 9 Ig-like C2-type domains span residues 48–130 (GGSL…PLPP), 135–235 (GENF…RLAA), 242–329 (GSER…LLTL), 337–402 (GQMV…SAEL), 408–486 (PRLD…VTLT), 491–568 (PALD…VAVT), 573–662 (PRFE…VVSA), 666–739 (PEMD…RTVT), and 746–830 (PVVA…ITVR). A glycan (N-linked (GlcNAc...) (high mannose) asparagine) is linked at Asn54. Cystine bridges form between Cys55–Cys99 and Cys59–Cys103. N-linked (GlcNAc...) asparagine glycosylation is found at Asn74 and Asn137. Residues Cys142 and Cys198 are joined by a disulfide bond. 2 positions are modified to phosphothreonine: Thr182 and Thr184. 2 N-linked (GlcNAc...) asparagine glycosylation sites follow: Asn195 and Asn214. Cys249 and Cys302 form a disulfide bridge. N-linked (GlcNAc...) asparagine glycans are attached at residues Asn303, Asn316, Asn371, and Asn397. Cys344 and Cys383 are disulfide-bonded. Cystine bridges form between Cys415-Cys470, Cys498-Cys552, and Cys580-Cys645. Residues Asn583 and Asn646 are each glycosylated (N-linked (GlcNAc...) asparagine). A disulfide bond links Cys673 and Cys725. N-linked (GlcNAc...) asparagine glycans are attached at residues Asn764, Asn795, and Asn796. Residues Cys769 and Cys814 are joined by a disulfide bond. A helical transmembrane segment spans residues 836-856 (LWVAVGGAAGGAALLAAGAGL). At 857–924 (AFYVQSTACK…EVFAIQLTSA (68 aa)) the chain is on the cytoplasmic side. Residues 891 to 903 (AGGAAGAEGGPEA) are compositionally biased toward gly residues. The segment at 891–911 (AGGAAGAEGGPEAAGGAAESP) is disordered.

It belongs to the immunoglobulin superfamily. ICAM family. Glycosylation at Asn-54 is critical for functional folding. In terms of tissue distribution, expressed on neurons in the most rostral segment of the mammalian brain, the telencephalon.

It localises to the membrane. Functionally, ICAM proteins are ligands for the leukocyte adhesion protein LFA-1 (integrin alpha-L/beta-2). This is Intercellular adhesion molecule 5 (ICAM5) from Homo sapiens (Human).